We begin with the raw amino-acid sequence, 472 residues long: Argininosuccinate lyase (472 aa).

Belongs to the lyase 1 family. Argininosuccinate lyase subfamily.

It localises to the cytoplasm. The catalysed reaction is 2-(N(omega)-L-arginino)succinate = fumarate + L-arginine. Its pathway is amino-acid biosynthesis; L-arginine biosynthesis; L-arginine from L-ornithine and carbamoyl phosphate: step 3/3. This Rhodococcus jostii (strain RHA1) protein is Argininosuccinate lyase.